A 404-amino-acid polypeptide reads, in one-letter code: Probable mannosyltransferase KTR3 (404 aa).

Over 1-27 (MSVHHKKKLMPKSALLIRKYQKGIRSS) the chain is Cytoplasmic. Residues 28–44 (FIGLIIVLSFLFFMSGS) form a helical; Signal-anchor for type II membrane protein membrane-spanning segment. Residues 45–83 (RSPEVPIAQGTSVSRVASKDYLMPFTDKSQGVIHPVDDG) form a stem region region. Residues 45–404 (RSPEVPIAQG…AGNYKLPPGI (360 aa)) are Lumenal-facing. The catalytic stretch occupies residues 84-404 (KKEKGVMVTL…AGNYKLPPGI (321 aa)). Glu295 (nucleophile) is an active-site residue.

Belongs to the glycosyltransferase 15 family. As to quaternary structure, interacts with SVP26.

The protein localises to the membrane. In terms of biological role, possible glycosyltransferase that transfers an alpha-D-mannosyl residue from GDP-mannose into lipid-linked oligosaccharide, forming an alpha-(1-&gt;2)-D-mannosyl-D-mannose linkage. The protein is Probable mannosyltransferase KTR3 (KTR3) of Saccharomyces cerevisiae (strain ATCC 204508 / S288c) (Baker's yeast).